Here is a 198-residue protein sequence, read N- to C-terminus: Acyl carrier protein phosphodiesterase (198 aa).

The protein belongs to the AcpH family.

The catalysed reaction is holo-[ACP] + H2O = apo-[ACP] + (R)-4'-phosphopantetheine + H(+). Functionally, converts holo-ACP to apo-ACP by hydrolytic cleavage of the phosphopantetheine prosthetic group from ACP. In Photorhabdus laumondii subsp. laumondii (strain DSM 15139 / CIP 105565 / TT01) (Photorhabdus luminescens subsp. laumondii), this protein is Acyl carrier protein phosphodiesterase.